The following is a 496-amino-acid chain: Stomatal closure-related actin-binding protein 1 (496 aa).

Residues 126 to 269 adopt a coiled-coil conformation; the sequence is RNKDDVEEAI…FLQLQKKLAM (144 aa).

Belongs to the SCAB family. As to quaternary structure, dimer. Dimerization is required for actin-binding activity. As to expression, expressed in roots, stems, leaves, flowers, siliques and guard cells.

The protein resides in the cytoplasm. It is found in the cytoskeleton. In terms of biological role, plant-specific actin binding protein that bundles and stabilizes microfilaments (MFs). Has no nucleation or capping activity. Regulates MF reorganization during stomatal closure. The binding to F-actin is insensitive to Ca(2+) and pH. Binds weakly to inositol phosphates. This is Stomatal closure-related actin-binding protein 1 from Arabidopsis thaliana (Mouse-ear cress).